A 208-amino-acid polypeptide reads, in one-letter code: Probable GTP-binding protein EngB (208 aa).

In terms of domain architecture, EngB-type G spans 23 to 205 (LTSEMVVLGR…RQTLLKHLLT (183 aa)). Residues 31–38 (GRSNVGKS), 57–61 (GKTRL), 84–87 (DLPG), 154–157 (TKFD), and 182–184 (FNA) each bind GTP. 2 residues coordinate Mg(2+): Ser38 and Thr59.

This sequence belongs to the TRAFAC class TrmE-Era-EngA-EngB-Septin-like GTPase superfamily. EngB GTPase family. Requires Mg(2+) as cofactor.

Its function is as follows. Necessary for normal cell division and for the maintenance of normal septation. The sequence is that of Probable GTP-binding protein EngB from Helicobacter pylori (strain ATCC 700392 / 26695) (Campylobacter pylori).